The chain runs to 447 residues: Cysteine--tRNA ligase (447 aa).

Cys28 contacts Zn(2+). Residues 30–40 (PTVYNYIHIGN) carry the 'HIGH' region motif. Zn(2+)-binding residues include Cys211, His236, and Glu240. Positions 268–272 (KMSKS) match the 'KMSKS' region motif. Lys271 is a binding site for ATP.

This sequence belongs to the class-I aminoacyl-tRNA synthetase family. As to quaternary structure, monomer. Zn(2+) serves as cofactor.

It is found in the cytoplasm. The catalysed reaction is tRNA(Cys) + L-cysteine + ATP = L-cysteinyl-tRNA(Cys) + AMP + diphosphate. In Streptococcus pyogenes serotype M18 (strain MGAS8232), this protein is Cysteine--tRNA ligase.